Reading from the N-terminus, the 579-residue chain is Zinc finger protein 248 (579 aa).

One can recognise a KRAB domain in the interval 8 to 79 (VSFKDVCVDF…EKGFPSQCHP (72 aa)). The C2H2-type 1; degenerate zinc finger occupies 240–264 (TVCKYNECGRTFIESLKLNISQRPH). Lys341 participates in a covalent cross-link: Glycyl lysine isopeptide (Lys-Gly) (interchain with G-Cter in SUMO2). 7 consecutive C2H2-type zinc fingers follow at residues 380–402 (FECGECGKTFWEKSNLTQHQRTH), 408–430 (YECTECGKAFCQKPHLTNHQRTH), 436–458 (YECKQCGKTFCVKSNLTEHQRTH), 464–486 (YECNACGKSFCHRSALTVHQRTH), 492–514 (FICNECGKSFCVKSNLIVHQRTH), 520–543 (YKCNECGKTFCEKSALTKHQRTHT), and 548–570 (YECNACGKTFSQRSVLTKHQRIH).

The protein belongs to the krueppel C2H2-type zinc-finger protein family.

Its subcellular location is the nucleus. Functionally, may be involved in transcriptional regulation. The sequence is that of Zinc finger protein 248 (ZNF248) from Homo sapiens (Human).